The sequence spans 908 residues: NADH-quinone oxidoreductase subunit G (908 aa).

The region spanning 2–83 (ATIHVDGKEY…GTFISIDDEE (82 aa)) is the 2Fe-2S ferredoxin-type domain. The [2Fe-2S] cluster site is built by Cys-34, Cys-45, Cys-48, and Cys-67. The region spanning 83-122 (EAKQFRESVVEWLMTNHPHDCPVCEEGGNCHLQDMTVMTG) is the 4Fe-4S His(Cys)3-ligated-type domain. Positions 99, 103, 106, 112, 151, 154, 157, 201, 228, 231, 235, and 263 each coordinate [4Fe-4S] cluster. The 4Fe-4S Mo/W bis-MGD-type domain maps to 221-277 (MQFAPSICQQCSIGCNISPGERYGELRRIENRYNGTVNHYFLCDRGRFGYGYVNLKD).

Belongs to the complex I 75 kDa subunit family. As to quaternary structure, composed of 13 different subunits. Subunits NuoCD, E, F, and G constitute the peripheral sector of the complex. [2Fe-2S] cluster serves as cofactor. [4Fe-4S] cluster is required as a cofactor.

Its subcellular location is the cytoplasm. The protein resides in the cell inner membrane. The catalysed reaction is a quinone + NADH + 5 H(+)(in) = a quinol + NAD(+) + 4 H(+)(out). In terms of biological role, NDH-1 shuttles electrons from NADH, via FMN and iron-sulfur (Fe-S) centers, to quinones in the respiratory chain. The immediate electron acceptor for the enzyme in this species is believed to be ubiquinone. Couples the redox reaction to proton translocation (for every two electrons transferred, four hydrogen ions are translocated across the cytoplasmic membrane), and thus conserves the redox energy in a proton gradient. This Escherichia coli (strain K12) protein is NADH-quinone oxidoreductase subunit G (nuoG).